The following is a 426-amino-acid chain: Serine--tRNA ligase (426 aa).

An L-serine-binding site is contributed by 231–233 (TSE). Position 262 to 264 (262 to 264 (RSE)) interacts with ATP. An L-serine-binding site is contributed by glutamate 285. ATP is bound at residue 349-352 (EISS). Residue serine 385 participates in L-serine binding.

This sequence belongs to the class-II aminoacyl-tRNA synthetase family. Type-1 seryl-tRNA synthetase subfamily. As to quaternary structure, homodimer. The tRNA molecule binds across the dimer.

The protein localises to the cytoplasm. It carries out the reaction tRNA(Ser) + L-serine + ATP = L-seryl-tRNA(Ser) + AMP + diphosphate + H(+). It catalyses the reaction tRNA(Sec) + L-serine + ATP = L-seryl-tRNA(Sec) + AMP + diphosphate + H(+). It participates in aminoacyl-tRNA biosynthesis; selenocysteinyl-tRNA(Sec) biosynthesis; L-seryl-tRNA(Sec) from L-serine and tRNA(Sec): step 1/1. Catalyzes the attachment of serine to tRNA(Ser). Is also able to aminoacylate tRNA(Sec) with serine, to form the misacylated tRNA L-seryl-tRNA(Sec), which will be further converted into selenocysteinyl-tRNA(Sec). The protein is Serine--tRNA ligase of Legionella pneumophila (strain Paris).